A 183-amino-acid polypeptide reads, in one-letter code: Protein Syd (183 aa).

It belongs to the Syd family.

The protein localises to the cell inner membrane. Functionally, interacts with the SecY protein in vivo. May bind preferentially to an uncomplexed state of SecY, thus functioning either as a chelating agent for excess SecY in the cell or as a regulatory factor that negatively controls the translocase function. This Aliivibrio fischeri (strain ATCC 700601 / ES114) (Vibrio fischeri) protein is Protein Syd.